The chain runs to 247 residues: Carboxy-S-adenosyl-L-methionine synthase (247 aa).

Residues Y39, 64–66, 89–90, 117–118, N132, and R199 each bind S-adenosyl-L-methionine; these read GCS, DN, and DI.

This sequence belongs to the class I-like SAM-binding methyltransferase superfamily. Cx-SAM synthase family. In terms of assembly, homodimer.

The catalysed reaction is prephenate + S-adenosyl-L-methionine = carboxy-S-adenosyl-L-methionine + 3-phenylpyruvate + H2O. Catalyzes the conversion of S-adenosyl-L-methionine (SAM) to carboxy-S-adenosyl-L-methionine (Cx-SAM). This chain is Carboxy-S-adenosyl-L-methionine synthase, found in Salmonella paratyphi B (strain ATCC BAA-1250 / SPB7).